The chain runs to 375 residues: Acetylornithine aminotransferase (375 aa).

Residues 102–103 (GA) and phenylalanine 129 each bind pyridoxal 5'-phosphate. Arginine 132 serves as a coordination point for N(2)-acetyl-L-ornithine. A pyridoxal 5'-phosphate-binding site is contributed by 214-217 (DEVQ). At lysine 243 the chain carries N6-(pyridoxal phosphate)lysine. Serine 271 lines the N(2)-acetyl-L-ornithine pocket. Threonine 272 is a binding site for pyridoxal 5'-phosphate.

It belongs to the class-III pyridoxal-phosphate-dependent aminotransferase family. ArgD subfamily. Homodimer. Pyridoxal 5'-phosphate is required as a cofactor.

It is found in the cytoplasm. The catalysed reaction is N(2)-acetyl-L-ornithine + 2-oxoglutarate = N-acetyl-L-glutamate 5-semialdehyde + L-glutamate. It functions in the pathway amino-acid biosynthesis; L-arginine biosynthesis; N(2)-acetyl-L-ornithine from L-glutamate: step 4/4. The sequence is that of Acetylornithine aminotransferase from Archaeoglobus fulgidus (strain ATCC 49558 / DSM 4304 / JCM 9628 / NBRC 100126 / VC-16).